The primary structure comprises 420 residues: Heterogeneous nuclear ribonucleoprotein D-like (420 aa).

Disordered regions lie at residues 1–83 (MEVP…RRRP) and 96–120 (QRSA…SVTM). R25 carries the post-translational modification Omega-N-methylarginine. Positions 36–52 (RQLAPLLPSLAPSSARQ) are enriched in low complexity. RRM domains are found at residues 148–230 (GKMF…KGKE) and 233–312 (KKVF…QPKE). An N6-methyllysine modification is found at K161. A Glycyl lysine isopeptide (Lys-Gly) (interchain with G-Cter in SUMO2) cross-link involves residue K209. N6-acetyllysine is present on K216. S241 is modified (phosphoserine). Disordered regions lie at residues 313–348 (VYRQ…NWNQ) and 398–420 (GQQS…YQPY). Over residues 323-342 (GGRGAAAGGRGGTRGRGRGQ) the composition is skewed to gly residues. The necessary for interaction with TNPO1 stretch occupies residues 342–420 (QGQNWNQGFN…GNHQNNYQPY (79 aa)). The segment at 396–420 (YSGQQSTYGKASRGGGNHQNNYQPY) is necessary for its nuclear import and export. R408 carries the dimethylated arginine; alternate modification. R408 bears the Omega-N-methylarginine; alternate mark.

Interacts with ZNF148. Interacts with TNPO1. Dimethylation of Arg-408 is probably of the asymmetric type. As to expression, expressed in heart, brain, placenta, lung, liver, skeletal muscle, kidney, pancreas, spleen, thymus, prostate, testis, ovary, small intestine, colon and leukocytes. Expressed in myeloid leukemia, gastric adenocarcinoma, cervical carcinoma, hepatoma, fibrosarcoma, colon adenocarcinoma, epidermoid carcinoma, osteosarcoma and urinary bladder carcinoma cells.

Its subcellular location is the nucleus. The protein localises to the cytoplasm. Its function is as follows. Acts as a transcriptional regulator. Promotes transcription repression. Promotes transcription activation in differentiated myotubes. Binds to double- and single-stranded DNA sequences. Binds to the transcription suppressor CATR sequence of the COX5B promoter. Binds with high affinity to RNA molecules that contain AU-rich elements (AREs) found within the 3'-UTR of many proto-oncogenes and cytokine mRNAs. Binds both to nuclear and cytoplasmic poly(A) mRNAs. Binds to poly(G) and poly(A), but not to poly(U) or poly(C) RNA homopolymers. Binds to the 5'-ACUAGC-3' RNA consensus sequence. This is Heterogeneous nuclear ribonucleoprotein D-like (HNRNPDL) from Homo sapiens (Human).